A 343-amino-acid polypeptide reads, in one-letter code: ABC transporter riboflavin-binding protein RfuA (343 aa).

A signal peptide spans 1-19 (MNGAVCVLSALIAVFTCFS). The N-palmitoyl cysteine moiety is linked to residue C20. Residue C20 is the site of S-diacylglycerol cysteine attachment. Residues 43–46 (SPVY), D124, Q140, Y176, W208, and D255 contribute to the riboflavin site.

Belongs to the BMP lipoprotein family. As to quaternary structure, monomer in solution. The complex is probably composed of two ATP-binding proteins (RfuB), two transmembrane proteins (RfuC and RfuD) and a solute-binding protein (RfuA).

It localises to the cell inner membrane. In terms of biological role, probably part of the ABC transporter complex RfuABCD involved in riboflavin import. Binds riboflavin. The chain is ABC transporter riboflavin-binding protein RfuA from Treponema pallidum (strain Nichols).